Here is a 196-residue protein sequence, read N- to C-terminus: UPF0056 membrane protein BUsg_434 (196 aa).

Transmembrane regions (helical) follow at residues 8–28 (TILL…MTIL), 45–65 (IIAL…LTIL), 71–91 (TVSI…IFPS), 105–125 (FLVP…TLML), 134–154 (MPYL…ILLL), and 174–194 (MGLI…KAWF).

It belongs to the UPF0056 (MarC) family.

The protein resides in the cell membrane. This is UPF0056 membrane protein BUsg_434 from Buchnera aphidicola subsp. Schizaphis graminum (strain Sg).